The primary structure comprises 246 residues: DNA repair protein RecO (246 aa).

It belongs to the RecO family.

Involved in DNA repair and RecF pathway recombination. The sequence is that of DNA repair protein RecO from Pelobacter propionicus (strain DSM 2379 / NBRC 103807 / OttBd1).